A 176-amino-acid chain; its full sequence is Neuropeptide-like protein 1 (176 aa).

An N-terminal signal peptide occupies residues 1-19 (MKATFVLACLLVIAAVSHA). Residues 59–79 (GKRSAEQNEQANKEDKATSDK) form a disordered region. Residues 61–79 (RSAEQNEQANKEDKATSDK) are compositionally biased toward basic and acidic residues.

Its function is as follows. In AWC olfactory sensory neurons, required for the detection of preferred food sources. In Caenorhabditis elegans, this protein is Neuropeptide-like protein 1 (nlp-1).